Here is a 219-residue protein sequence, read N- to C-terminus: Holliday junction branch migration complex subunit RuvA (219 aa).

The interval 1 to 66 is domain I; the sequence is MIEYIIGKIS…NFLFEYYGFK (66 aa). The tract at residues 67 to 148 is domain II; sequence TLREKIFFEN…SEYNNDVNHS (82 aa). Positions 149–154 are flexible linker; sequence SINQQS. Residues 155-219 form a domain III region; it reads NSYNPVPDLV…EAVTNKTTVS (65 aa).

This sequence belongs to the RuvA family. Homotetramer. Forms an RuvA(8)-RuvB(12)-Holliday junction (HJ) complex. HJ DNA is sandwiched between 2 RuvA tetramers; dsDNA enters through RuvA and exits via RuvB. An RuvB hexamer assembles on each DNA strand where it exits the tetramer. Each RuvB hexamer is contacted by two RuvA subunits (via domain III) on 2 adjacent RuvB subunits; this complex drives branch migration. In the full resolvosome a probable DNA-RuvA(4)-RuvB(12)-RuvC(2) complex forms which resolves the HJ.

Its subcellular location is the cytoplasm. Its function is as follows. The RuvA-RuvB-RuvC complex processes Holliday junction (HJ) DNA during genetic recombination and DNA repair, while the RuvA-RuvB complex plays an important role in the rescue of blocked DNA replication forks via replication fork reversal (RFR). RuvA specifically binds to HJ cruciform DNA, conferring on it an open structure. The RuvB hexamer acts as an ATP-dependent pump, pulling dsDNA into and through the RuvAB complex. HJ branch migration allows RuvC to scan DNA until it finds its consensus sequence, where it cleaves and resolves the cruciform DNA. This chain is Holliday junction branch migration complex subunit RuvA, found in Malacoplasma penetrans (strain HF-2) (Mycoplasma penetrans).